Reading from the N-terminus, the 765-residue chain is Protein BCH2 (765 aa).

Positions 1–31 (MSFLWGSTKSKKGKNKKAAGSLPSGVVPQQR) are disordered. Residues 735–765 (LECLSKNRNEACLAYERPLPDLPSTIKPLAD) form a CHS5-binding region.

Belongs to the CHAPS family. Component of the CHS5/6 complex composed of the 4 CHAPS proteins BCH1, BCH2, BUD7, and CHS6 as well as at least CHS5 and GTP-bound ARF1. The complex interacts with the cargo protein CHS3.

The protein localises to the golgi apparatus. It localises to the trans-Golgi network membrane. Its function is as follows. Member of the CHS5-ARF1P-binding proteins (CHAPS) which mediates export of specific cargo proteins, including chitin synthase CHS3. This chain is Protein BCH2 (BCH2), found in Saccharomyces cerevisiae (strain ATCC 204508 / S288c) (Baker's yeast).